Here is a 189-residue protein sequence, read N- to C-terminus: Shikimate kinase (189 aa).

22-27 (ASGKST) provides a ligand contact to ATP. Ser-26 contacts Mg(2+). Positions 44, 68, and 90 each coordinate substrate. Residue Arg-128 participates in ATP binding. A substrate-binding site is contributed by Arg-147.

It belongs to the shikimate kinase family. Monomer. Requires Mg(2+) as cofactor.

It localises to the cytoplasm. It catalyses the reaction shikimate + ATP = 3-phosphoshikimate + ADP + H(+). It functions in the pathway metabolic intermediate biosynthesis; chorismate biosynthesis; chorismate from D-erythrose 4-phosphate and phosphoenolpyruvate: step 5/7. Catalyzes the specific phosphorylation of the 3-hydroxyl group of shikimic acid using ATP as a cosubstrate. The chain is Shikimate kinase from Synechococcus sp. (strain JA-3-3Ab) (Cyanobacteria bacterium Yellowstone A-Prime).